The sequence spans 131 residues: Holo-[acyl-carrier-protein] synthase (131 aa).

Asp-6 and Glu-55 together coordinate Mg(2+).

This sequence belongs to the P-Pant transferase superfamily. AcpS family. The cofactor is Mg(2+).

The protein localises to the cytoplasm. The enzyme catalyses apo-[ACP] + CoA = holo-[ACP] + adenosine 3',5'-bisphosphate + H(+). In terms of biological role, transfers the 4'-phosphopantetheine moiety from coenzyme A to a Ser of acyl-carrier-protein. The protein is Holo-[acyl-carrier-protein] synthase of Verminephrobacter eiseniae (strain EF01-2).